We begin with the raw amino-acid sequence, 475 residues long: Glutamate--tRNA ligase (475 aa).

The short motif at 8–18 is the 'HIGH' region element; that stretch reads PSPTGTLHIGT. Residues 247–251 carry the 'KMSKS' region motif; the sequence is KLSKR. Lys250 serves as a coordination point for ATP.

This sequence belongs to the class-I aminoacyl-tRNA synthetase family. Glutamate--tRNA ligase type 1 subfamily. Monomer.

The protein resides in the cytoplasm. It carries out the reaction tRNA(Glu) + L-glutamate + ATP = L-glutamyl-tRNA(Glu) + AMP + diphosphate. Its function is as follows. Catalyzes the attachment of glutamate to tRNA(Glu) in a two-step reaction: glutamate is first activated by ATP to form Glu-AMP and then transferred to the acceptor end of tRNA(Glu). The protein is Glutamate--tRNA ligase of Synechococcus sp. (strain RCC307).